A 50-amino-acid chain; its full sequence is Photosystem II reaction center protein K (50 aa).

The propeptide occupies M1 to G13. Residues I25–A45 traverse the membrane as a helical segment.

This sequence belongs to the PsbK family. PSII is composed of 1 copy each of membrane proteins PsbA, PsbB, PsbC, PsbD, PsbE, PsbF, PsbH, PsbI, PsbJ, PsbK, PsbL, PsbM, PsbT, PsbY, PsbZ, Psb30/Ycf12, at least 3 peripheral proteins of the oxygen-evolving complex and a large number of cofactors. It forms dimeric complexes.

Its subcellular location is the plastid. The protein localises to the chloroplast thylakoid membrane. One of the components of the core complex of photosystem II (PSII). PSII is a light-driven water:plastoquinone oxidoreductase that uses light energy to abstract electrons from H(2)O, generating O(2) and a proton gradient subsequently used for ATP formation. It consists of a core antenna complex that captures photons, and an electron transfer chain that converts photonic excitation into a charge separation. This chain is Photosystem II reaction center protein K, found in Euglena myxocylindracea.